The sequence spans 470 residues: Cell division protein FtsA (470 aa).

The disordered stretch occupies residues 416–470; the sequence is NKKDTHENEVESTDEEIYQSEDNHQEHKQNHEHVQDKDKDKEESKFKKLMKSLFE. Residues 425–434 show a composition bias toward acidic residues; sequence VESTDEEIYQ. The segment covering 436-461 has biased composition (basic and acidic residues); the sequence is EDNHQEHKQNHEHVQDKDKDKEESKF.

It belongs to the FtsA/MreB family. Self-interacts. Interacts with FtsZ.

The protein resides in the cell membrane. Cell division protein that is involved in the assembly of the Z ring. May serve as a membrane anchor for the Z ring. In Staphylococcus aureus (strain NCTC 8325 / PS 47), this protein is Cell division protein FtsA.